The sequence spans 452 residues: MQVNETLSEGLKHEFQISIPAAEIDAKVNERLAGMKDKVRLNGFRPGKVPVAHLKKVYGKSVAAETLEETIRETNQKIFTDRGFRLANEAKVTMPTDQAEIEGILDGKKDLTYSVAIEVVPPITLADFKTFKVEKLVADVTDAEVDDAIKRIADQNRPYAPKSEGAKAENGDRVTLAFKGTIDGEAFEGGSGENIPLVLGSNSFIPGFEDQLTGIGVGETRVIKVPFPKNYGAAHLAGKDAEFETTATLIEAPQDATIDDEFAKTLGVESLDKLKEAMRERLTQEYAGATRQKLKRELLDRLDETHKFDPPESLVNDEFDLMWKSIHAEMESAGKTFADEDTTEDEAKTEYRKIADRRVRLGLVLSEIGDKNKITVTDDEVSRAVIERARQMPGREKEVWDYYRSNPGAVAQLRAPIFEDKVVDFILELAEVSEKKVSREELFKEEDDKAAA.

One can recognise a PPIase FKBP-type domain in the interval 171–256 (GDRVTLAFKG…ATLIEAPQDA (86 aa)).

It belongs to the FKBP-type PPIase family. Tig subfamily.

Its subcellular location is the cytoplasm. It carries out the reaction [protein]-peptidylproline (omega=180) = [protein]-peptidylproline (omega=0). In terms of biological role, involved in protein export. Acts as a chaperone by maintaining the newly synthesized protein in an open conformation. Functions as a peptidyl-prolyl cis-trans isomerase. This chain is Trigger factor, found in Afipia carboxidovorans (strain ATCC 49405 / DSM 1227 / KCTC 32145 / OM5) (Oligotropha carboxidovorans).